Reading from the N-terminus, the 465-residue chain is Protein hedgehog (465 aa).

Cys-79 carries N-palmitoyl cysteine lipidation. Positions 143, 144, 149, 179, 180, 183, and 185 each coordinate Ca(2+). A lipid anchor (Cholesterol glycine ester) is attached at Gly-251.

It belongs to the hedgehog family. In terms of assembly, interacts with shf. In terms of processing, the C-terminal part of the hedgehog protein precursor displays an autoproteolysis activity that results in the cleavage of the full-length protein into two parts (N-product and C-product). In addition, the C-terminal part displays a cholesterol transferase activity that results by the covalent attachment of a cholesterol moiety to the C-terminal of the newly generated N-product. The N-product is the active species in both local and long-range signaling, whereas the C-product has no signaling activity. Post-translationally, cholesterylation is required for N-product targeting to lipid rafts and multimerization. N-palmitoylation by Rasp of the hedgehog N-product, within the secretory pathway, is required for the embryonic and larval patterning activities of the hedgehog signal.

Its subcellular location is the nucleus. It is found in the cytoplasm. The protein localises to the cell membrane. It catalyses the reaction glycyl-L-cysteinyl-[protein] + cholesterol + H(+) = [protein]-C-terminal glycyl cholesterol ester + N-terminal L-cysteinyl-[protein]. Functionally, the C-terminal part of the hedgehog protein precursor displays an autoproteolysis activity that results in the cleavage of the full-length protein into two parts (N-product and C-product). In addition, the C-terminal part displays a cholesterol transferase activity that results by the covalent attachment of a cholesterol moiety to the C-terminal of the newly generated N-product. Once cleaved, the C-product has no signaling activity and diffuses from the cell. In terms of biological role, the dually lipidated hedgehog protein N-product is a morphogen which is essential for a variety of patterning events during development. Establishes the anterior-posterior axis of the embryonic segments and patterns the larval imaginal disks. Binds to the patched (ptc) receptor, which functions in association with smoothened (smo), to activate the transcription of target genes wingless (wg), decapentaplegic (dpp) and ptc. In the absence of hh, ptc represses the constitutive signaling activity of smo through fused (fu). Essential component of a signaling pathway which regulates the Duox-dependent gut immune response to bacterial uracil; required to activate Cad99C-dependent endosome formation, norpA-dependent Ca2+ mobilization and p38 MAPK, which are essential steps in the Duox-dependent production of reactive oxygen species (ROS) in response to intestinal bacterial infection. During photoreceptor differentiation, it up-regulates transcription of Ubr3, which in turn promotes the hh-signaling pathway by mediating the ubiquitination and degradation of cos. This chain is Protein hedgehog, found in Drosophila sechellia (Fruit fly).